Here is a 1280-residue protein sequence, read N- to C-terminus: MTKKIKLSNSESNKVNNNNNNNHGNGHNHNHSHNHGEMCHGHGIIGIVDSVTGENIIQVNGENLRSVPNGHSLIHNINSIINSHSKHGKIKNILKDSTIISSSINLSDKPINKITEENSPPSSPTLSSSTNTTTDRQELPQQQQQPQQQQSQPSTPPPQQQTNQKQQPEFNRYQANDILFRNKLTRSLSRNIPPLSLLKQNFKDEMENSFHTAISNIKDLNEKVEMVNLIFQHNLSENNAMVNVDSIIHSSTSGLLSEYKQITETFDWEQTSKGYKNKGNELFQKKQYSDALLLYNESLRIYDMELAAAATSTNLNEKENGGGGNVGGSATATATTINTPDVSILSSIHSNRCLCLVNLERYKEGAIEATRGIDLVGSSSVLHKLYYRRGICYYHLRKHYKAKKDFLRAHTLIEKRDSSDLASIENYLFKIQKLSLPLQKDEEIEQELDNKNNNSNDDEKQQQQQQQQDIDVTISSILEKSESLIDSRVEFLYQSDLVGRISEASDFIPSNTVLYQEEPYVSCLDRNYHSQYCYNCFKEILSPIYCKECSNSQYCSNKCLNEDYVKQHGRECGKGFLIICSHESLLVIRLLARKGRDYREANKGKKEEEPQQQQQKQQKSRKLPNLTFIPKPNPTQIDQNLNKPKIVLPEPTTAAINTALSSASTPTTATATTTTTTTTATTPTTLAETLSSTSLTENKSDSTPPPTPLPPSSSSSSSSSSSTTTTTFSFNMSELQNLQISQDDELFDVPTDPALFGKSNTYSQSYELINSFNPHFEHHSNDSMANMIFDAFVIERFLLYYQKDLGILSEDIDVHVILRHLCQLTTYTFAIPGYIDNHDSLVLKTLQLQQQQQQQQQQQQNQQSNQQPNQQSNQQSNQQSNQQSQPNQSPIIQSQNPPHASPFSPLRYSVQKYSQDKIGYAVYPMASLMNHSCDNNTHLQYDGCSLTIKSLFNIEKGEEILGCYGPHAFLNPLKDRLINLYNEFFFVCRCKACSEKSGPDPIKCPGSYHDHLNSPESSPVECSGTLLESINMNQLVTMAKLQQQQQQQQQHQQQNDKKKFNSNPTNLGSNNNNNYLNNNFNNPLRNGNPFLLKQTYDRYDDHEHRYFCCSKCGIELNGFDSFSLTSQIIISDNLFEMGFKAMTLYGNLSKDIETMLLRALELRKSIFKPCSKKIGDIYDSLSRFSISREDGASAAKYLELLIENVISRLGHSNSADLGREYSKLGQIYLTLGEIEKSEDAIEKAESILMSWKSNDPTDEEVLFLLTNRRKLFTAAHLINK.

2 disordered regions span residues 1 to 35 and 111 to 167; these read MTKK…SHNH and INKI…QKQQ. 2 stretches are compositionally biased toward low complexity: residues 16-25 and 117-153; these read NNNNNNNHGN and ENSP…QSQP. 2 TPR repeats span residues 272-305 and 383-416; these read SKGY…YDME and HKLY…IEKR. Residues 439–468 are a coiled coil; it reads QKDEEIEQELDNKNNNSNDDEKQQQQQQQQ. Positions 533, 536, 546, 549, 555, 559, 568, and 572 each coordinate Zn(2+). An MYND-type zinc finger spans residues 533–572; it reads CYNCFKEILSPIYCKECSNSQYCSNKCLNEDYVKQHGREC. Disordered regions lie at residues 601-642, 659-726, 854-905, and 1039-1079; these read ANKG…QNLN, ALSS…TTTT, QQQQ…PFSP, and AKLQ…LNNN. Composition is skewed to low complexity over residues 659-697, 712-726, 854-898, 1042-1053, and 1061-1079; these read ALSS…SLTE, SSSS…TTTT, QQQQ…QNPP, QQQQQQQQQHQQ, and NSNP…LNNN. The SET domain maps to 822–965; it reads CQLTTYTFAI…KGEEILGCYG (144 aa). The TPR 3 repeat unit spans residues 1218–1251; the sequence is GREYSKLGQIYLTLGEIEKSEDAIEKAESILMSW.

It belongs to the class V-like SAM-binding methyltransferase superfamily.

Its function is as follows. Probable methyltransferase. This Dictyostelium discoideum (Social amoeba) protein is SET and MYND domain-containing protein DDB_G0284059.